The sequence spans 424 residues: COUP transcription factor 1 (424 aa).

A disordered region spans residues 1-82 (MAMVVSSWRD…QGPPGSGQSQ (82 aa)). Residues 39–68 (EQQQQQAGSGAPHTPQTPGQPGAPATPGTA) show a composition bias toward low complexity. The segment at residues 84–159 (HIECVVCGDK…VGMRREAVQR (76 aa)) is a DNA-binding region (nuclear receptor). 2 consecutive NR C4-type zinc fingers follow at residues 87 to 107 (CVVC…CEGC) and 123 to 147 (CRAN…LKKC). Residues 185-411 (YLSGYISLLL…TLIRDMLLSG (227 aa)) form the NR LBD domain.

The protein belongs to the nuclear hormone receptor family. NR2 subfamily. Binds DNA as dimer; homodimer and probable heterodimer with NR2F6. Interacts with GTF2B; this interaction is direct. Interacts with COPS2.

The protein localises to the nucleus. Coup (chicken ovalbumin upstream promoter) transcription factor binds to the ovalbumin promoter and, in conjunction with another protein (S300-II) stimulates initiation of transcription. Binds to both direct repeats and palindromes of the 5'-AGGTCA-3' motif. Represses transcriptional activity of LHCG. The protein is COUP transcription factor 1 (NR2F1) of Bos taurus (Bovine).